Consider the following 827-residue polypeptide: Lon protease 2 (827 aa).

Residues 1-22 (MSDEKKKGSAASAMPTAMAPPG) form a disordered region. The segment covering 9-21 (SAASAMPTAMAPP) has biased composition (low complexity). Positions 33–227 (LPILPLRNSV…LVLELLNRKR (195 aa)) constitute a Lon N-terminal domain. 379-386 (GPPGVGKT) is an ATP binding site. Residues 615-796 (TEVPGVATGL…DDVLKAALET (182 aa)) enclose the Lon proteolytic domain. Catalysis depends on residues Ser702 and Lys745. The segment at 799–827 (VGVAGTPGGEPGKEAPLPKPAESAPEVRA) is disordered.

It belongs to the peptidase S16 family. As to quaternary structure, homohexamer. Organized in a ring with a central cavity.

It is found in the cytoplasm. It carries out the reaction Hydrolysis of proteins in presence of ATP.. ATP-dependent serine protease that mediates the selective degradation of mutant and abnormal proteins as well as certain short-lived regulatory proteins. Required for cellular homeostasis and for survival from DNA damage and developmental changes induced by stress. Degrades polypeptides processively to yield small peptide fragments that are 5 to 10 amino acids long. Binds to DNA in a double-stranded, site-specific manner. This chain is Lon protease 2, found in Myxococcus xanthus.